Reading from the N-terminus, the 217-residue chain is MKIIMLGAPGAGKGTQAKKIAEKYKIPHISTGDIFRANIKNNTELGAKAKEYMDQGLLVPDEITLDMVMDRFAQDDCKNGYVLDGFPRTIPQAEALNKALVEEGEQIDYAINIEVPDELIVSRMSGRRACVSCGGTYHVVFTPTKKEGICDACGGELTIRDDDKPETVAKRLNVYHNQTQPLINYYHGLGLLEEVDGTKEALEVFEDIIGILGKVAQ.

Residue 10–15 coordinates ATP; sequence GAGKGT. Residues 30–59 are NMP; sequence STGDIFRANIKNNTELGAKAKEYMDQGLLV. AMP is bound by residues Thr-31, Arg-36, 57–59, 85–88, and Gln-92; these read LLV and GFPR. Residues 126–163 are LID; that stretch reads GRRACVSCGGTYHVVFTPTKKEGICDACGGELTIRDDD. Residue Arg-127 participates in ATP binding. Zn(2+) contacts are provided by Cys-130 and Cys-133. Residue 136 to 137 coordinates ATP; it reads TY. Residues Cys-150 and Cys-153 each contribute to the Zn(2+) site. AMP-binding residues include Arg-160 and Arg-171. Lys-199 lines the ATP pocket.

Belongs to the adenylate kinase family. As to quaternary structure, monomer.

It is found in the cytoplasm. The catalysed reaction is AMP + ATP = 2 ADP. It participates in purine metabolism; AMP biosynthesis via salvage pathway; AMP from ADP: step 1/1. Functionally, catalyzes the reversible transfer of the terminal phosphate group between ATP and AMP. Plays an important role in cellular energy homeostasis and in adenine nucleotide metabolism. In Lachnoclostridium phytofermentans (strain ATCC 700394 / DSM 18823 / ISDg) (Clostridium phytofermentans), this protein is Adenylate kinase.